Consider the following 518-residue polypeptide: Glutamate--cysteine ligase (518 aa).

The protein belongs to the glutamate--cysteine ligase type 1 family. Type 1 subfamily.

It carries out the reaction L-cysteine + L-glutamate + ATP = gamma-L-glutamyl-L-cysteine + ADP + phosphate + H(+). Its pathway is sulfur metabolism; glutathione biosynthesis; glutathione from L-cysteine and L-glutamate: step 1/2. In Escherichia fergusonii (strain ATCC 35469 / DSM 13698 / CCUG 18766 / IAM 14443 / JCM 21226 / LMG 7866 / NBRC 102419 / NCTC 12128 / CDC 0568-73), this protein is Glutamate--cysteine ligase.